Reading from the N-terminus, the 183-residue chain is Deoxyuridine 5'-triphosphate nucleotidohydrolase (183 aa).

Residues 67-69, Asn-80, 84-86, and Lys-94 each bind substrate; these read RSG and TID. The interval 138–183 is disordered; sequence RAEGGFGSTGGHAGLDPASGTSGQVAEGGPTGGNRYASVVSDREGQ. The segment covering 141 to 150 has biased composition (gly residues); sequence GGFGSTGGHA.

The protein belongs to the dUTPase family. Mg(2+) is required as a cofactor.

It carries out the reaction dUTP + H2O = dUMP + diphosphate + H(+). It participates in pyrimidine metabolism; dUMP biosynthesis; dUMP from dCTP (dUTP route): step 2/2. This enzyme is involved in nucleotide metabolism: it produces dUMP, the immediate precursor of thymidine nucleotides and it decreases the intracellular concentration of dUTP so that uracil cannot be incorporated into DNA. This chain is Deoxyuridine 5'-triphosphate nucleotidohydrolase, found in Streptomyces coelicolor (strain ATCC BAA-471 / A3(2) / M145).